The primary structure comprises 60 residues: UPF0434 protein YPA_0693 (60 aa).

This sequence belongs to the UPF0434 family.

This Yersinia pestis bv. Antiqua (strain Antiqua) protein is UPF0434 protein YPA_0693.